Here is a 152-residue protein sequence, read N- to C-terminus: SsrA-binding protein (152 aa).

The protein belongs to the SmpB family.

Its subcellular location is the cytoplasm. Functionally, required for rescue of stalled ribosomes mediated by trans-translation. Binds to transfer-messenger RNA (tmRNA), required for stable association of tmRNA with ribosomes. tmRNA and SmpB together mimic tRNA shape, replacing the anticodon stem-loop with SmpB. tmRNA is encoded by the ssrA gene; the 2 termini fold to resemble tRNA(Ala) and it encodes a 'tag peptide', a short internal open reading frame. During trans-translation Ala-aminoacylated tmRNA acts like a tRNA, entering the A-site of stalled ribosomes, displacing the stalled mRNA. The ribosome then switches to translate the ORF on the tmRNA; the nascent peptide is terminated with the 'tag peptide' encoded by the tmRNA and targeted for degradation. The ribosome is freed to recommence translation, which seems to be the essential function of trans-translation. This is SsrA-binding protein from Rickettsia canadensis (strain McKiel).